The chain runs to 206 residues: Small ribosomal subunit protein eS1 (206 aa).

The protein belongs to the eukaryotic ribosomal protein eS1 family.

The sequence is that of Small ribosomal subunit protein eS1 from Halobacterium salinarum (strain ATCC 29341 / DSM 671 / R1).